We begin with the raw amino-acid sequence, 157 residues long: Small ribosomal subunit protein uS7 (157 aa).

The protein belongs to the universal ribosomal protein uS7 family. Part of the 30S ribosomal subunit. Contacts proteins S9 and S11.

In terms of biological role, one of the primary rRNA binding proteins, it binds directly to 16S rRNA where it nucleates assembly of the head domain of the 30S subunit. Is located at the subunit interface close to the decoding center, probably blocks exit of the E-site tRNA. The sequence is that of Small ribosomal subunit protein uS7 from Verminephrobacter eiseniae (strain EF01-2).